Reading from the N-terminus, the 161-residue chain is Allophycocyanin beta chain (161 aa).

At Asn-71 the chain carries N4-methylasparagine. (2R,3E)-phycocyanobilin is bound at residue Cys-81.

Belongs to the phycobiliprotein family. As to quaternary structure, heterodimer of an alpha and a beta chain. Post-translationally, contains one covalently linked phycocyanobilin chromophore.

The protein localises to the cellular thylakoid membrane. In terms of biological role, light-harvesting photosynthetic bile pigment-protein from the phycobiliprotein complex. Allophycocyanin has a maximum absorption at approximately 650 nanometers. The protein is Allophycocyanin beta chain (apcB) of Synechococcus sp. (strain ATCC 27144 / PCC 6301 / SAUG 1402/1) (Anacystis nidulans).